Here is a 177-residue protein sequence, read N- to C-terminus: ATP synthase subunit delta (177 aa).

The protein belongs to the ATPase delta chain family. As to quaternary structure, F-type ATPases have 2 components, F(1) - the catalytic core - and F(0) - the membrane proton channel. F(1) has five subunits: alpha(3), beta(3), gamma(1), delta(1), epsilon(1). F(0) has three main subunits: a(1), b(2) and c(10-14). The alpha and beta chains form an alternating ring which encloses part of the gamma chain. F(1) is attached to F(0) by a central stalk formed by the gamma and epsilon chains, while a peripheral stalk is formed by the delta and b chains.

It localises to the cell inner membrane. F(1)F(0) ATP synthase produces ATP from ADP in the presence of a proton or sodium gradient. F-type ATPases consist of two structural domains, F(1) containing the extramembraneous catalytic core and F(0) containing the membrane proton channel, linked together by a central stalk and a peripheral stalk. During catalysis, ATP synthesis in the catalytic domain of F(1) is coupled via a rotary mechanism of the central stalk subunits to proton translocation. Its function is as follows. This protein is part of the stalk that links CF(0) to CF(1). It either transmits conformational changes from CF(0) to CF(1) or is implicated in proton conduction. The protein is ATP synthase subunit delta of Shewanella sediminis (strain HAW-EB3).